Consider the following 198-residue polypeptide: GTP-binding protein Di-Ras1 (198 aa).

GTP-binding positions include 17-22, 33-39, 61-65, 121-125, Ala-151, and 151-152; these read GVGKSS, RDTYIPT, DTTGS, NKCDE, and AK. Positions 36–44 match the Effector region motif; it reads YIPTIEDTY. Residues 178-192 show a composition bias toward basic and acidic residues; the sequence is DGKRSGKQKRTDRVK. A disordered region spans residues 178–198; sequence DGKRSGKQKRTDRVKGKCTLM. At Cys-195 the chain carries Cysteine methyl ester. A lipid anchor (S-geranylgeranyl cysteine) is attached at Cys-195. A propeptide spans 196–198 (removed in mature form); the sequence is TLM.

Belongs to the small GTPase superfamily. Di-Ras family. As to expression, highly expressed in heart and brain.

The protein resides in the cell membrane. Its function is as follows. Displays low GTPase activity and exists predominantly in the GTP-bound form. In Homo sapiens (Human), this protein is GTP-binding protein Di-Ras1 (DIRAS1).